Consider the following 541-residue polypeptide: Zinc finger protein 513 (541 aa).

The tract at residues 1-118 (MPRRKQSHPQ…GEARGERPGP (118 aa)) is disordered. Positions 44–57 (LEFEEEEEEEEGDG) are enriched in acidic residues. A phosphoserine mark is found at Ser85 and Ser96. The segment covering 103-115 (EPARGPGEARGER) has biased composition (basic and acidic residues). 8 consecutive C2H2-type zinc fingers follow at residues 150–172 (YSCR…MQTH), 178–200 (FRCG…TRTH), 206–228 (YRCP…QRTH), 360–382 (FACS…MKTH), 388–410 (FRCA…QRVH), 416–438 (YKCP…GRIH), 444–466 (FRCS…MLRH), and 472–494 (FRCA…QKVH). The segment at 492–541 (KVHGHGGAGGPGLSASEGWAPPHSPPSVLSSRGPPALGTAGSRAVHTDSS) is disordered.

The protein belongs to the krueppel C2H2-type zinc-finger protein family. Binds DNA. Can associate with the proximal promoter regions of PAX6 and SP4, and their known targets including ARR3, RHO, OPN1MW2 and OPN1SW. As to expression, in the retina, expressed in the outer and inner nuclear layers, and the ganglion cell layer.

The protein resides in the nucleus. Its function is as follows. Transcriptional regulator that plays a role in retinal development and maintenance. This chain is Zinc finger protein 513 (ZNF513), found in Homo sapiens (Human).